A 1338-amino-acid polypeptide reads, in one-letter code: Nonribosomal peptide synthetase astA (1338 aa).

The segment at 22–52 (IAVVSGDIPSPHPKNEPSQTSTLHIPRDSDL) is disordered. The interval 271–681 (FQARCRQNPS…GRKGAEVKLR (411 aa)) is adenylation. The 74-residue stretch at 820-893 (TPVEIIIHDA…SLAEKCSAGG (74 aa)) folds into the Carrier domain. S854 is modified (O-(pantetheine 4'-phosphoryl)serine). Positions 949 to 1336 (TFIFRLSGPV…IIRFLDSPDS (388 aa)) are condensation.

Belongs to the NRP synthetase family.

The catalysed reaction is 7beta,14,16-trihydroxyconfertifolin + benzoate + H(+) = dideacetyl astellolide A + H2O. It carries out the reaction 7beta,14,16-trihydroxyconfertifolin + 4-hydroxybenzoate + H(+) = dideacetyl astellolide B + H2O. The protein operates within secondary metabolite biosynthesis; terpenoid biosynthesis. Functionally, nonribosomal peptide synthetase; part of the gene cluster that mediates the biosynthesis of astellolides, drimane-type sesquiterpene esters that show antimicrobial, anti-inflammatory, and anti-tumor activities. The first step in astellolide biosynthesis is performed by the sesquiterpene cyclase astC that catalyzes the formation of drimanyl pyrophosphate from farnesyl pyrophosphate. Drimanyl pyrophosphate is then dephosphorylated by the sesquiterpene phosphatase astI to produce drimanyl monophosphate which is further dephosphorylated to drim-8-ene-11-ol by atsK. Drim-8-ene-11-ol is converted to confertifolin, probably by the cytochrome P450 monooxygenase astD and/or the dehydrogenase astE. The cytochrome P450 monooxygenases astB, astF and astJ then hydroxylate confertifolin at C6, C14, or C15 to form trihydroxy confertifolin. The nonribosomal peptide synthetase astA catalyzes ester bond formation between trihydroxy contifolin and benzoic acid (BA) or 4-hydroxy benzoic acid (4HBA), leading to the formation of dideacetyl astellolides A and B, respectively. Finally, the O-acetyltransferase astG converts dideacetyl astellolides A and B into deacetyl astellolides A and B. The sequence is that of Nonribosomal peptide synthetase astA from Aspergillus oryzae (strain ATCC 42149 / RIB 40) (Yellow koji mold).